Here is a 448-residue protein sequence, read N- to C-terminus: tRNA modification GTPase MnmE (448 aa).

Positions 24, 81, and 120 each coordinate (6S)-5-formyl-5,6,7,8-tetrahydrofolate. The 158-residue stretch at 216 to 373 (GLNVVLVGAP…LKRTLLREAG (158 aa)) folds into the TrmE-type G domain. K(+) is bound at residue Asn226. GTP is bound by residues 226-231 (NVGKSS), 245-251 (TDIAGTT), and 270-273 (DTAG). Ser230 is a Mg(2+) binding site. The K(+) site is built by Thr245, Ile247, and Thr250. Thr251 is a binding site for Mg(2+). Lys448 serves as a coordination point for (6S)-5-formyl-5,6,7,8-tetrahydrofolate.

Belongs to the TRAFAC class TrmE-Era-EngA-EngB-Septin-like GTPase superfamily. TrmE GTPase family. As to quaternary structure, homodimer. Heterotetramer of two MnmE and two MnmG subunits. K(+) serves as cofactor.

The protein resides in the cytoplasm. Exhibits a very high intrinsic GTPase hydrolysis rate. Involved in the addition of a carboxymethylaminomethyl (cmnm) group at the wobble position (U34) of certain tRNAs, forming tRNA-cmnm(5)s(2)U34. The protein is tRNA modification GTPase MnmE of Neisseria meningitidis serogroup B (strain ATCC BAA-335 / MC58).